A 150-amino-acid chain; its full sequence is UPF0178 protein Bcep1808_1605 (150 aa).

It belongs to the UPF0178 family.

This chain is UPF0178 protein Bcep1808_1605, found in Burkholderia vietnamiensis (strain G4 / LMG 22486) (Burkholderia cepacia (strain R1808)).